The chain runs to 164 residues: Cyclin-dependent kinase inhibitor 1 (164 aa).

Residue S2 is modified to N-acetylserine. Residue S2 forms a Glycyl serine ester (Ser-Gly) (interchain with G-Cter in ubiquitin) linkage. Residues 13 to 41 (CGSKACRRLFGPVDSEQLSRDCDALMAGC) form a C4-type zinc finger. Residues 17 to 24 (ACRRLFGP) form a required for binding cyclins region. Residues 53-58 (FVTETP) form a required for binding CDKs region. The tract at residues 76-164 (LYLPTGPRRG…RRLIFSKRKP (89 aa)) is disordered. T80 carries the phosphothreonine; by LKB1 modification. A Phosphoserine; by GSK3-beta modification is found at S114. Phosphoserine is present on S130. The short motif at 140 to 164 (RKRRQTSMTDFYHSKRRLIFSKRKP) is the PIP-box K+4 motif element. The Nuclear localization signal signature appears at 141-156 (KRRQTSMTDFYHSKRR). Residue T145 is modified to Phosphothreonine; by PKA, PKB/AKT1, PIM1 and PIM2. S146 bears the Phosphoserine; by PKC and NUAK1 mark. Residues 152–164 (HSKRRLIFSKRKP) are interaction with TRIM39. Basic residues predominate over residues 153-164 (SKRRLIFSKRKP). Phosphoserine; by PKC; in vitro is present on S160.

It belongs to the CDI family. Interacts with HDAC1; the interaction is prevented by competitive binding of C10orf90/FATS to HDAC1 facilitating acetylation and protein stabilization of CDKN1A/p21. Interacts with MKRN1. Interacts with PSMA3. Interacts with PCNA. Component of the ternary complex, cyclin D-CDK4-CDKN1A. Interacts (via its N-terminal domain) with CDK4; the interaction promotes the assembly of the cyclin D-CDK4 complex, its nuclear translocation and promotes the cyclin D-dependent enzyme activity of CDK4. Binding to CDK2 leads to CDK2/cyclin E inactivation at the G1-S phase DNA damage checkpoint, thereby arresting cells at the G1-S transition during DNA repair. Interacts with PIM1. Interacts with STK11 and NUAK1. Interacts wih DTL. Interacts with isoform 1 and isoform 2 of TRIM39. Interacts with PKP3; the interaction sequesters CDKN1A to the cytoplasm thereby repressing its role as an inhibitor of CDK4- and CDK6-driven RB1 phosphorylation. Phosphorylation of Thr-145 by Akt or of Ser-146 by PKC impairs binding to PCNA. Phosphorylation at Ser-114 by GSK3-beta enhances ubiquitination by the DCX(DTL) complex. Phosphorylation of Thr-145 by PIM2 enhances CDKN1A stability and inhibits cell proliferation. Phosphorylation of Thr-145 by PIM1 results in the relocation of CDKN1A to the cytoplasm and enhanced CDKN1A protein stability. UV radiation-induced phosphorylation at Thr-80 by LKB1 and at Ser-146 by NUAK1 leads to its degradation. Post-translationally, ubiquitinated by MKRN1; leading to polyubiquitination and 26S proteasome-dependent degradation. Ubiquitinated by the DCX(DTL) complex, also named CRL4(CDT2) complex, leading to its degradation during S phase or following UV irradiation. Ubiquitination by the DCX(DTL) complex is essential to control replication licensing and is PCNA-dependent: interacts with PCNA via its PIP-box, while the presence of the containing the 'K+4' motif in the PIP box, recruit the DCX(DTL) complex, leading to its degradation. Ubiquitination at Ser-2 leads to degradation by the proteasome pathway. Ubiquitinated by RNF114; leading to proteasomal degradation. In terms of processing, acetylation leads to protein stability. Acetylated in vitro on Lys-141, Lys-154, Lys-161 and Lys-163. Deacetylation by HDAC1 is prevented by competitive binding of C10orf90/FATS to HDAC1. Expressed in all adult tissues, with 5-fold lower levels observed in the brain.

The protein localises to the cytoplasm. Its subcellular location is the nucleus. In terms of biological role, plays an important role in controlling cell cycle progression and DNA damage-induced G2 arrest. Involved in p53/TP53 mediated inhibition of cellular proliferation in response to DNA damage. Also involved in p53-independent DNA damage-induced G2 arrest mediated by CREB3L1 in astrocytes and osteoblasts. Binds to and inhibits cyclin-dependent kinase activity, preventing phosphorylation of critical cyclin-dependent kinase substrates and blocking cell cycle progression. Functions in the nuclear localization and assembly of cyclin D-CDK4 complex and promotes its kinase activity towards RB1. At higher stoichiometric ratios, inhibits the kinase activity of the cyclin D-CDK4 complex. Inhibits DNA synthesis by DNA polymerase delta by competing with POLD3 for PCNA binding. Negatively regulates the CDK4- and CDK6-driven phosphorylation of RB1 in keratinocytes, thereby resulting in the release of E2F1 and subsequent transcription of E2F1-driven G1/S phase promoting genes. This is Cyclin-dependent kinase inhibitor 1 from Homo sapiens (Human).